The chain runs to 184 residues: Cytidylate kinase (184 aa).

An ATP-binding site is contributed by 8-16; sequence GQPGSGKTT.

It belongs to the cytidylate kinase family. Type 2 subfamily.

Its subcellular location is the cytoplasm. The enzyme catalyses CMP + ATP = CDP + ADP. The catalysed reaction is dCMP + ATP = dCDP + ADP. The chain is Cytidylate kinase from Pyrobaculum islandicum (strain DSM 4184 / JCM 9189 / GEO3).